The sequence spans 524 residues: Glutamyl-tRNA(Gln) amidotransferase subunit A, mitochondrial (524 aa).

The active-site Charge relay system is K76. The segment at 146–168 (KQYRGKGSPDSSQEDQEPQWLVA) is disordered. The active-site Charge relay system is the S171. S195 (acyl-ester intermediate) is an active-site residue.

Belongs to the amidase family. GatA subfamily. Subunit of the heterotrimeric GatCAB amidotransferase (AdT) complex, composed of A (QRSL1), B (GATB) and C (GATC) subunits.

The protein localises to the mitochondrion. The catalysed reaction is L-glutamyl-tRNA(Gln) + L-glutamine + ATP + H2O = L-glutaminyl-tRNA(Gln) + L-glutamate + ADP + phosphate + H(+). Allows the formation of correctly charged Gln-tRNA(Gln) through the transamidation of misacylated Glu-tRNA(Gln) in the mitochondria. The reaction takes place in the presence of glutamine and ATP through an activated gamma-phospho-Glu-tRNA(Gln). This is Glutamyl-tRNA(Gln) amidotransferase subunit A, mitochondrial from Ornithorhynchus anatinus (Duckbill platypus).